Here is a 471-residue protein sequence, read N- to C-terminus: MFAFYFLTACISLKGVFGVSPSYNGLGLTPQMGWDNWNTFACDVSEQLLLDTADRISDLGLKDMGYKYIILDDCWSSGRDSDGFLVADEQKFPNGMGHVADHLHNNSFLFGMYSSAGEYTCAGYPGSLGREEEDAQFFANNRVDYLKYDNCYNKGQFGTPEISYHRYKAMSDALNKTGRPIFYSLCNWGQDLTFYWGSGIANSWRMSGDVTAEFTRPDSRCPCDGDEYDCKYAGFHCSIMNILNKAAPMGQNAGVGGWNDLDNLEVGVGNLTDDEEKAHFSMWAMVKSPLIIGANVNNLKASSYSIYSQASVIAINQDSNGIPATRVWRYYVSDTDEYGQGEIQMWSGPLDNGDQVVALLNGGSVSRPMNTTLEEIFFDSNLGSKKLTSTWDIYDLWANRVDNSTASAILGRNKTATGILYNATEQSYKDGLSKNDTRLFGQKIGSLSPNAILNTTVPAHGIAFYRLRPSS.

A signal peptide spans methionine 1–glycine 18. A disulfide bridge connects residues cysteine 42 and cysteine 74. Substrate-binding residues include aspartate 72 and aspartate 73. N-linked (GlcNAc...) asparagine glycosylation is present at asparagine 105. Residues cysteine 121 and cysteine 151 are joined by a disulfide bond. Position 147 (lysine 147) interacts with substrate. Aspartate 149 acts as the Nucleophile in catalysis. An N-linked (GlcNAc...) asparagine glycan is attached at asparagine 175. Arginine 205 is a substrate binding site. Aspartate 209 acts as the Proton donor in catalysis. 2 cysteine pairs are disulfide-bonded: cysteine 221-cysteine 237 and cysteine 223-cysteine 230. A substrate-binding site is contributed by glutamine 251. N-linked (GlcNAc...) asparagine glycosylation is found at asparagine 270, asparagine 370, asparagine 403, asparagine 413, asparagine 422, asparagine 435, and asparagine 454.

This sequence belongs to the glycosyl hydrolase 27 family. Homotetramer.

Its subcellular location is the secreted. It carries out the reaction Hydrolysis of terminal, non-reducing alpha-D-galactose residues in alpha-D-galactosides, including galactose oligosaccharides, galactomannans and galactolipids.. This chain is Alpha-galactosidase 1 (MEL1), found in Saccharomyces cerevisiae (Baker's yeast).